The following is an 88-amino-acid chain: MASSDKAFKLDIVTPQKLFFSGEVTSVIAPGLDGLFQIMKGHAPLLAALKSGKVRLSLSDKSEDSFQIEGGFFEVSGNKAILLTEDVS.

It belongs to the ATPase epsilon chain family. F-type ATPases have 2 components, CF(1) - the catalytic core - and CF(0) - the membrane proton channel. CF(1) has five subunits: alpha(3), beta(3), gamma(1), delta(1), epsilon(1). CF(0) has three main subunits: a, b and c.

The protein localises to the cell inner membrane. Produces ATP from ADP in the presence of a proton gradient across the membrane. This Chlorobium limicola protein is ATP synthase epsilon chain (atpC).